Reading from the N-terminus, the 816-residue chain is Leucine--tRNA ligase (816 aa).

Positions serine 40 to histidine 51 match the 'HIGH' region motif. A 'KMSKS' region motif is present at residues lysine 576–serine 580. An ATP-binding site is contributed by lysine 579.

Belongs to the class-I aminoacyl-tRNA synthetase family.

It localises to the cytoplasm. It catalyses the reaction tRNA(Leu) + L-leucine + ATP = L-leucyl-tRNA(Leu) + AMP + diphosphate. In Clostridium beijerinckii (strain ATCC 51743 / NCIMB 8052) (Clostridium acetobutylicum), this protein is Leucine--tRNA ligase.